The sequence spans 110 residues: U1-lycotoxin-Ls1aa (110 aa).

The signal sequence occupies residues 1 to 20 (MKFVLLFGVLLVTLFSYSSA). Residues 21–44 (EMLDDFDQADEDELLSLIEKEEAR) constitute a propeptide that is removed on maturation. Intrachain disulfides connect Cys47–Cys62, Cys54–Cys71, Cys61–Cys89, and Cys73–Cys87.

This sequence belongs to the neurotoxin 19 (CSTX) family. 03 subfamily. In terms of tissue distribution, expressed by the venom gland.

The protein localises to the secreted. This is U1-lycotoxin-Ls1aa from Lycosa singoriensis (Wolf spider).